A 296-amino-acid chain; its full sequence is Pre-mRNA-splicing factor CWC23 (296 aa).

The region spanning 14–86 (DLYKLLELNY…AKKAEYDQWV (73 aa)) is the J domain.

The protein belongs to the DnaJ family. Associated with the spliceosome.

The protein localises to the cytoplasm. The protein resides in the nucleus. Functionally, involved in pre-mRNA splicing. May be involved in endoplasmic reticulum-associated protein degradation (ERAD) and required for growth at low and high temperatures. This Candida glabrata (strain ATCC 2001 / BCRC 20586 / JCM 3761 / NBRC 0622 / NRRL Y-65 / CBS 138) (Yeast) protein is Pre-mRNA-splicing factor CWC23 (CWC23).